The sequence spans 278 residues: MSSKSQLPFSTRASNHPNPLARKLFEVAEAKKSNVTVSADVTTTKELLDLADRLGPYIAVIKTHIDILSDFGPETINGLNALAEKHNFLIFEDRKFIDIGNTVQKQYHGGALKISEWAHIINCAVLPAEGIVQALAETAQAEDFPHGSERGLLILAEMTSKGSLATGEYTSASVDYARKYPSFVLGFVSTRALTEVSSTVTAADNEDFVVFTTGVNLSSKGDKLGQQYQTPQSAIGRGADFIIAGRGIYTAPDPVEAAKQYQQQGWEAYLARVGGASQ.

Substrate is bound by residues D40, K62–H64, D93–T102, Y228, and R246. K95 serves as the catalytic Proton donor.

Belongs to the OMP decarboxylase family.

The enzyme catalyses orotidine 5'-phosphate + H(+) = UMP + CO2. It functions in the pathway pyrimidine metabolism; UMP biosynthesis via de novo pathway; UMP from orotate: step 2/2. The protein is Orotidine 5'-phosphate decarboxylase (PYR1) of Passalora fulva (Tomato leaf mold).